The chain runs to 815 residues: Capsid vertex component 1 (815 aa).

2 disordered regions span residues 227 to 280 (THEQ…GDRE) and 795 to 815 (RAPSDFSTTSTSGHESVTILY). Basic and acidic residues-rich tracts occupy residues 236–262 (PPKEDEAASEAKKKEADDAMKKLKDAA) and 271–280 (NRQREPGDRE). Positions 799–809 (DFSTTSTSGHE) are enriched in polar residues.

The protein belongs to the herpesviridae CVC1 protein family. In terms of assembly, interacts (via C-terminus) with capsid vertex component 2/CVC2.

It localises to the virion. The protein resides in the host nucleus. Functionally, capsid vertex-specific component that plays a role during viral DNA encapsidation, assuring correct genome cleavage and presumably stabilizing capsids that contain full-length viral genomes. The polypeptide is Capsid vertex component 1 (Amazona oratrix (yellow-headed parrot)).